Consider the following 148-residue polypeptide: Globin, monomeric component M-IV (148 aa).

Positions 2 to 147 constitute a Globin domain; it reads GLSAAQRQVV…ISGALISGLQ (146 aa). His91 is a binding site for heme b.

As to quaternary structure, monomer.

This chain is Globin, monomeric component M-IV, found in Glycera dibranchiata (Bloodworm).